A 202-amino-acid chain; its full sequence is Pyridoxal 5'-phosphate synthase subunit PdxT (202 aa).

52-54 lines the L-glutamine pocket; it reads GES. Cys-84 functions as the Nucleophile in the catalytic mechanism. Residues Arg-116 and 143 to 144 contribute to the L-glutamine site; that span reads IR. Catalysis depends on charge relay system residues His-184 and Glu-186.

Belongs to the glutaminase PdxT/SNO family. In terms of assembly, in the presence of PdxS, forms a dodecamer of heterodimers. Only shows activity in the heterodimer.

The enzyme catalyses aldehydo-D-ribose 5-phosphate + D-glyceraldehyde 3-phosphate + L-glutamine = pyridoxal 5'-phosphate + L-glutamate + phosphate + 3 H2O + H(+). It carries out the reaction L-glutamine + H2O = L-glutamate + NH4(+). Its pathway is cofactor biosynthesis; pyridoxal 5'-phosphate biosynthesis. Functionally, catalyzes the hydrolysis of glutamine to glutamate and ammonia as part of the biosynthesis of pyridoxal 5'-phosphate. The resulting ammonia molecule is channeled to the active site of PdxS. This chain is Pyridoxal 5'-phosphate synthase subunit PdxT, found in Pyrobaculum neutrophilum (strain DSM 2338 / JCM 9278 / NBRC 100436 / V24Sta) (Thermoproteus neutrophilus).